The following is a 303-amino-acid chain: MNAMHNAPASDPSLVYPSPLKEFWQSFAHNKGALGGLLFMLLIVFCALFAPWVAPYDPSEQFRDFLLTPPSWLEGGQARFLLGTDELGRDLLSRLIHGARLSLLIGLSSVVISLIPGILLGLLAGFSPNRAGPLIMRLMDIMLALPSLLLAVAIVAILGPGLINTVIAIAIVSLPAYVRLTRAAVMTELNRDYVTASRLAGAGTLRLMFVCVLPNCMAPLIVQATLSFSSAILDAAALGFLGLGVQPPTPEWGTMLASARDYIERAWWVVSLPGLTILLSVLAINLMGDGLRDALDPKLKNAA.

The next 7 membrane-spanning stretches (helical) occupy residues 33–53 (ALGGLLFMLLIVFCALFAPWV), 103–123 (LLIGLSSVVISLIPGILLGLL), 131–151 (AGPLIMRLMDIMLALPSLLLA), 152–172 (VAIVAILGPGLINTVIAIAIV), 202–222 (AGTLRLMFVCVLPNCMAPLIV), 225–245 (TLSFSSAILDAAALGFLGLGV), and 267–287 (WWVVSLPGLTILLSVLAINLM). Residues 99-288 (ARLSLLIGLS…LSVLAINLMG (190 aa)) form the ABC transmembrane type-1 domain.

The protein belongs to the binding-protein-dependent transport system permease family. OppBC subfamily. The complex is composed of two ATP-binding proteins (DppD and DppF), two transmembrane proteins (DppB and DppC) and a solute-binding protein (DppA1-A5). Five orthologous SBPs (DppA1-A5) are present in P.aeruginosa, which increases the substrate specificity of the DppBCDF transporter.

Its subcellular location is the cell inner membrane. Its function is as follows. Part of the ABC transporter DppABCDF involved in the uptake of various di/tripeptides. Is also involved in the uptake of phaseolotoxin, a toxic tripeptide inhibiting the enzyme ornithine carbamoyltransferase. Responsible for the translocation of the substrate across the membrane. In Pseudomonas aeruginosa (strain UCBPP-PA14), this protein is Di/tripeptide transport system permease protein DppC.